Here is an 89-residue protein sequence, read N- to C-terminus: MDTRLINIGFGNIVAAGRVIAIVSPESAPIKRIISDARERGQLVDATYGRRTRAVIITDSGHVILSAIQPETVANRFLTAKVGAPEEPE.

Belongs to the RemA family.

This is Putative regulatory protein CYA_2696 from Synechococcus sp. (strain JA-3-3Ab) (Cyanobacteria bacterium Yellowstone A-Prime).